A 157-amino-acid polypeptide reads, in one-letter code: 2-C-methyl-D-erythritol 2,4-cyclodiphosphate synthase (157 aa).

A divalent metal cation contacts are provided by Asp8 and His10. 4-CDP-2-C-methyl-D-erythritol 2-phosphate-binding positions include 8 to 10 and 34 to 35; these read DVH and HS. His42 serves as a coordination point for a divalent metal cation. 4-CDP-2-C-methyl-D-erythritol 2-phosphate is bound by residues 56–58, 61–65, 100–106, 132–135, Phe139, and Arg142; these read DIG, FPDTD, AQAPKMA, and TTTE.

This sequence belongs to the IspF family. As to quaternary structure, homotrimer. A divalent metal cation is required as a cofactor.

The catalysed reaction is 4-CDP-2-C-methyl-D-erythritol 2-phosphate = 2-C-methyl-D-erythritol 2,4-cyclic diphosphate + CMP. The protein operates within isoprenoid biosynthesis; isopentenyl diphosphate biosynthesis via DXP pathway; isopentenyl diphosphate from 1-deoxy-D-xylulose 5-phosphate: step 4/6. Functionally, involved in the biosynthesis of isopentenyl diphosphate (IPP) and dimethylallyl diphosphate (DMAPP), two major building blocks of isoprenoid compounds. Catalyzes the conversion of 4-diphosphocytidyl-2-C-methyl-D-erythritol 2-phosphate (CDP-ME2P) to 2-C-methyl-D-erythritol 2,4-cyclodiphosphate (ME-CPP) with a corresponding release of cytidine 5-monophosphate (CMP). This Pseudomonas putida (strain ATCC 700007 / DSM 6899 / JCM 31910 / BCRC 17059 / LMG 24140 / F1) protein is 2-C-methyl-D-erythritol 2,4-cyclodiphosphate synthase.